A 492-amino-acid polypeptide reads, in one-letter code: NADH-quinone oxidoreductase subunit N (492 aa).

The next 14 membrane-spanning stretches (helical) occupy residues 13-33, 43-63, 82-102, 110-132, 136-155, 169-189, 210-230, 245-265, 272-292, 306-326, 331-351, 377-397, 410-430, and 457-477; these read MLPV…GFWL, ILFV…APWA, AALL…LVSL, VSFA…IAFS, IVML…LATL, FLLG…LYGA, IGIL…KIAL, PTLV…AGML, LAAG…TLVI, LLAY…LGDT, AALG…LAVV, AVAL…AGFF, GYLL…VYYL, and VAVA…NLWY.

It belongs to the complex I subunit 2 family. As to quaternary structure, NDH-1 is composed of 15 different subunits. Subunits NuoA, H, J, K, L, M, N constitute the membrane sector of the complex.

Its subcellular location is the cell membrane. The catalysed reaction is a quinone + NADH + 5 H(+)(in) = a quinol + NAD(+) + 4 H(+)(out). Functionally, NDH-1 shuttles electrons from NADH, via FMN and iron-sulfur (Fe-S) centers, to quinones in the respiratory chain. The immediate electron acceptor for the enzyme in this species is believed to be a menaquinone. Couples the redox reaction to proton translocation (for every two electrons transferred, four hydrogen ions are translocated across the cytoplasmic membrane), and thus conserves the redox energy in a proton gradient. The polypeptide is NADH-quinone oxidoreductase subunit N (Deinococcus radiodurans (strain ATCC 13939 / DSM 20539 / JCM 16871 / CCUG 27074 / LMG 4051 / NBRC 15346 / NCIMB 9279 / VKM B-1422 / R1)).